Reading from the N-terminus, the 333-residue chain is Probable endo-beta-1,4-glucanase B (333 aa).

A signal peptide spans 1-17 (MKFRNLFFAAVAGSAVA). Residues N37 and N100 are each glycosylated (N-linked (GlcNAc...) asparagine). E160 (proton donor) is an active-site residue. Residue E267 is the Nucleophile of the active site.

The protein belongs to the glycosyl hydrolase 5 (cellulase A) family.

The protein resides in the secreted. It catalyses the reaction Endohydrolysis of (1-&gt;4)-beta-D-glucosidic linkages in cellulose, lichenin and cereal beta-D-glucans.. Has endoglucanase activity on substrates containing beta-1,4 glycosidic bonds, like in carboxymethylcellulose (CMC), hydroxyethylcellulose (HEC) and beta-glucan. Involved in the degradation of complex natural cellulosic substrates. In Aspergillus oryzae (strain ATCC 42149 / RIB 40) (Yellow koji mold), this protein is Probable endo-beta-1,4-glucanase B (eglB).